The chain runs to 206 residues: Peptidyl-tRNA hydrolase (206 aa).

Tyr-14 contributes to the tRNA binding site. His-19 serves as the catalytic Proton acceptor. Residues Phe-64 and Asn-66 each contribute to the tRNA site. Positions 185 to 206 are disordered; it reads VNGEAPKKSKDQAKEPANEQPR. A compositionally biased stretch (basic and acidic residues) spans 189-206; that stretch reads APKKSKDQAKEPANEQPR.

Belongs to the PTH family. As to quaternary structure, monomer.

Its subcellular location is the cytoplasm. The enzyme catalyses an N-acyl-L-alpha-aminoacyl-tRNA + H2O = an N-acyl-L-amino acid + a tRNA + H(+). Hydrolyzes ribosome-free peptidyl-tRNAs (with 1 or more amino acids incorporated), which drop off the ribosome during protein synthesis, or as a result of ribosome stalling. Its function is as follows. Catalyzes the release of premature peptidyl moieties from peptidyl-tRNA molecules trapped in stalled 50S ribosomal subunits, and thus maintains levels of free tRNAs and 50S ribosomes. The sequence is that of Peptidyl-tRNA hydrolase from Herpetosiphon aurantiacus (strain ATCC 23779 / DSM 785 / 114-95).